The following is a 337-amino-acid chain: GTP 3',8-cyclase (337 aa).

In terms of domain architecture, Radical SAM core spans 17-243; sequence PFQRQYYYLR…HKSHTDGPAK (227 aa). Arg-26 provides a ligand contact to GTP. Residues Cys-33 and Cys-37 each contribute to the [4Fe-4S] cluster site. Residue Tyr-39 participates in S-adenosyl-L-methionine binding. Residue Cys-40 participates in [4Fe-4S] cluster binding. A GTP-binding site is contributed by Arg-76. An S-adenosyl-L-methionine-binding site is contributed by Gly-80. Thr-107 is a binding site for GTP. Position 131 (Ser-131) interacts with S-adenosyl-L-methionine. A GTP-binding site is contributed by Lys-168. Residue Met-202 coordinates S-adenosyl-L-methionine. 2 residues coordinate [4Fe-4S] cluster: Cys-265 and Cys-268. A GTP-binding site is contributed by 270–272; it reads RLR. Cys-282 lines the [4Fe-4S] cluster pocket.

Belongs to the radical SAM superfamily. MoaA family. As to quaternary structure, monomer and homodimer. The cofactor is [4Fe-4S] cluster.

The enzyme catalyses GTP + AH2 + S-adenosyl-L-methionine = (8S)-3',8-cyclo-7,8-dihydroguanosine 5'-triphosphate + 5'-deoxyadenosine + L-methionine + A + H(+). It participates in cofactor biosynthesis; molybdopterin biosynthesis. Its function is as follows. Catalyzes the cyclization of GTP to (8S)-3',8-cyclo-7,8-dihydroguanosine 5'-triphosphate. This is GTP 3',8-cyclase from Haemophilus influenzae (strain PittGG).